Consider the following 249-residue polypeptide: NADH-quinone oxidoreductase subunit C (249 aa).

The interval 1–29 (MTENQTTPDPGEPGSSADRPGGLVPTGDS) is disordered.

This sequence belongs to the complex I 30 kDa subunit family. NDH-1 is composed of 14 different subunits. Subunits NuoB, C, D, E, F, and G constitute the peripheral sector of the complex.

The protein localises to the cell membrane. It catalyses the reaction a quinone + NADH + 5 H(+)(in) = a quinol + NAD(+) + 4 H(+)(out). Functionally, NDH-1 shuttles electrons from NADH, via FMN and iron-sulfur (Fe-S) centers, to quinones in the respiratory chain. The immediate electron acceptor for the enzyme in this species is believed to be a menaquinone. Couples the redox reaction to proton translocation (for every two electrons transferred, four hydrogen ions are translocated across the cytoplasmic membrane), and thus conserves the redox energy in a proton gradient. The protein is NADH-quinone oxidoreductase subunit C of Saccharopolyspora erythraea (strain ATCC 11635 / DSM 40517 / JCM 4748 / NBRC 13426 / NCIMB 8594 / NRRL 2338).